A 104-amino-acid polypeptide reads, in one-letter code: N(4)-acetylcytidine amidohydrolase (104 aa).

An ASCH domain is found at 6–96; the sequence is ITFYQRFEAD…TIYPNEHESW (91 aa). Lys-21 (proton acceptor) is an active-site residue. The active-site Nucleophile is the Thr-24. Glu-74 (proton donor) is an active-site residue.

The protein belongs to the N(4)-acetylcytidine amidohydrolase family.

It catalyses the reaction N(4)-acetylcytidine + H2O = cytidine + acetate + H(+). The catalysed reaction is N(4)-acetyl-2'-deoxycytidine + H2O = 2'-deoxycytidine + acetate + H(+). The enzyme catalyses N(4)-acetylcytosine + H2O = cytosine + acetate + H(+). Its function is as follows. Catalyzes the hydrolysis of N(4)-acetylcytidine (ac4C). The polypeptide is N(4)-acetylcytidine amidohydrolase (Haemophilus influenzae (strain 86-028NP)).